The chain runs to 201 residues: MEKFITIKSTVVPLPIEDVDTDQIIPARFLKATTKEGFGKSLFCDWRYNQDGTPKADFVMNNPLYSGQILVAGKNFGCGSSREHAAWAIGDAGFRVVVSSFFADIFRGNALNNGILPVQVSDAFLKSIFDAVAANAKQELVVDLANQVISIAGTDLKESFVINEYKKTCLINGYDDIDYVLSIKDKIEAYEKTSKYLSLLA.

The protein belongs to the LeuD family. LeuD type 1 subfamily. In terms of assembly, heterodimer of LeuC and LeuD.

It catalyses the reaction (2R,3S)-3-isopropylmalate = (2S)-2-isopropylmalate. The protein operates within amino-acid biosynthesis; L-leucine biosynthesis; L-leucine from 3-methyl-2-oxobutanoate: step 2/4. Catalyzes the isomerization between 2-isopropylmalate and 3-isopropylmalate, via the formation of 2-isopropylmaleate. This chain is 3-isopropylmalate dehydratase small subunit, found in Cytophaga hutchinsonii (strain ATCC 33406 / DSM 1761 / CIP 103989 / NBRC 15051 / NCIMB 9469 / D465).